The following is a 554-amino-acid chain: Bifunctional epoxide hydrolase 2 (554 aa).

Residues 1 to 224 form a phosphatase region; sequence MALRVAAFDL…KVTGTQFPEA (224 aa). Mg(2+) is bound by residues aspartate 9 and aspartate 11. Position 55 is an N6-succinyllysine (lysine 55). 123–124 contacts phosphate; it reads TN. Lysine 176 is subject to N6-acetyllysine; alternate. Position 176 is an N6-succinyllysine; alternate (lysine 176). Residue aspartate 185 coordinates Mg(2+). Residues lysine 191 and lysine 215 each carry the N6-acetyllysine modification. Residues 233 to 554 form an epoxide hydrolase region; the sequence is NDVSHGYVTV…VQNPSVTSKI (322 aa). Positions 257–530 constitute an AB hydrolase-1 domain; that stretch reads PALCLCHGFP…CGHWTQIEKP (274 aa). Aspartate 333 serves as the catalytic Nucleophile. Position 368 is a phosphoserine (serine 368). Position 371 is an N6-succinyllysine (lysine 371). Residue tyrosine 381 coordinates substrate. N6-succinyllysine is present on residues lysine 420 and lysine 454. Tyrosine 465 (proton donor) is an active-site residue. Lysine 504 is modified (N6-succinyllysine). N6-acetyllysine; alternate is present on lysine 508. The residue at position 508 (lysine 508) is an N6-succinyllysine; alternate. Cysteine 521 is lipidated: S-(15-deoxy-Delta12,14-prostaglandin J2-9-yl)cysteine. Catalysis depends on histidine 523, which acts as the Proton acceptor. The short motif at 552 to 554 is the Microbody targeting signal element; it reads SKI. N6-succinyllysine is present on lysine 553.

This sequence belongs to the AB hydrolase superfamily. Epoxide hydrolase family. In terms of assembly, homodimer. Mg(2+) is required as a cofactor. The N-terminus is blocked. In terms of processing, the covalent modification of cysteine by 15-deoxy-Delta12,14-prostaglandin-J2 is autocatalytic and reversible. It may occur as an alternative to other cysteine modifications, such as S-nitrosylation and S-palmitoylation. As to expression, detected in liver, intestine, ovary and kidney. Detected at low levels in heart and muscle.

Its subcellular location is the cytoplasm. The protein resides in the peroxisome. It catalyses the reaction an epoxide + H2O = an ethanediol. It carries out the reaction (9S,10S)-10-hydroxy-9-(phosphooxy)octadecanoate + H2O = (9S,10S)-9,10-dihydroxyoctadecanoate + phosphate. The enzyme catalyses 8-hydroxy-(11S,12S)-epoxy-(5Z,9E,14Z)-eicosatrienoate + H2O = (8,11R,12S)-trihydroxy-(5Z,9E,14Z)-eicosatrienoate. The catalysed reaction is 10-hydroxy-(11S,12S)-epoxy- (5Z,8Z,14Z)-eicosatrienoate + H2O = (10,11S,12R)-trihydroxy-(5Z,8Z,14Z)-eicosatrienoate. It catalyses the reaction (8S,9R)-epoxy-(5Z,11Z,14Z)-eicosatrienoate + H2O = (8S,9S)-dihydroxy-(5Z,11Z,14Z)-eicosatrienoate. It carries out the reaction (11S,12R)-epoxy-(5Z,8Z,14Z)-eicosatrienoate + H2O = (11R,12R)-dihydroxy-(5Z,8Z,14Z)-eicosatrienoate. The enzyme catalyses (11S,12R)-epoxy-(5Z,8Z,14Z)-eicosatrienoate + H2O = (11S,12S)-dihydroxy-(5Z,8Z,14Z)-eicosatrienoate. The catalysed reaction is (14S,15R)-epoxy-(5Z,8Z,11Z)-eicosatrienoate + H2O = (14R,15R)-dihydroxy-(5Z,8Z,11Z)-eicosatrienoate. It catalyses the reaction (14S,15R)-epoxy-(5Z,8Z,11Z)-eicosatrienoate + H2O = (14S,15S)-dihydroxy-(5Z,8Z,11Z)-eicosatrienoate. It carries out the reaction (11R,12S)-epoxy-(5Z,8Z,14Z)-eicosatrienoate + H2O = (11S,12S)-dihydroxy-(5Z,8Z,14Z)-eicosatrienoate. The enzyme catalyses (11R,12S)-epoxy-(5Z,8Z,14Z)-eicosatrienoate + H2O = (11R,12R)-dihydroxy-(5Z,8Z,14Z)-eicosatrienoate. The catalysed reaction is (8S,9R)-epoxy-(5Z,11Z,14Z)-eicosatrienoate + H2O = (8R,9R)-dihydroxy-(5Z,11Z,14Z)-eicosatrienoate. It catalyses the reaction 12-phosphooxy-(9Z)-octadecenoate + H2O = 12-hydroxy-(9Z)-octadecenoate + phosphate. It carries out the reaction 12-phosphooxy-(9E)-octadecenoate + H2O = 12-hydroxy-(9E)-octadecenoate + phosphate. The enzyme catalyses 12-(phosphooxy)octadecanoate + H2O = 12-hydroxyoctadecanoate + phosphate. The catalysed reaction is 8,9-epoxy-(5Z,11Z,14Z)-eicosatrienoate + H2O = 8,9-dihydroxy-(5Z,11Z,14Z)-eicosatrienoate. It catalyses the reaction 11,12-epoxy-(5Z,8Z,14Z)-eicosatrienoate + H2O = 11,12-dihydroxy-(5Z,8Z,14Z)-eicosatrienoate. It carries out the reaction 14,15-epoxy-(5Z,8Z,11Z)-eicosatrienoate + H2O = 14,15-dihydroxy-(5Z,8Z,11Z)-eicosatrienoate. The enzyme catalyses 9,10-epoxy-(12Z)-octadecenoate + H2O = 9,10-dihydroxy-(12Z)-octadecenoate. The catalysed reaction is 1-tetradecanoyl-sn-glycerol 3-phosphate + H2O = 1-tetradecanoyl-sn-glycerol + phosphate. It catalyses the reaction 1-octadecanoyl-sn-glycero-3-phosphate + H2O = 1-octadecanoyl-sn-glycerol + phosphate. It carries out the reaction 1-(5Z,8Z,11Z,14Z-eicosatetraenoyl)-sn-glycero-3-phosphate + H2O = 1-(5Z,8Z,11Z,14Z-eicosatetraenoyl)-sn-glycerol + phosphate. The enzyme catalyses 1-hexadecanoyl-sn-glycero-3-phosphate + H2O = 1-hexadecanoyl-sn-glycerol + phosphate. The catalysed reaction is 1-(9Z-octadecenoyl)-sn-glycero-3-phosphate + H2O = 1-(9Z-octadecenoyl)-sn-glycerol + phosphate. It catalyses the reaction (14R,15S)-epoxy-(5Z,8Z,11Z)-eicosatrienoate + H2O = (14R,15R)-dihydroxy-(5Z,8Z,11Z)-eicosatrienoate. With respect to regulation, inhibited by 1-(1-acetylpiperidin-4-yl)-3-(4-(trifl uoromethoxy)phenyl)urea (TPAU), 1-cyclohexyl-3-dodecylurea (CDU), 12-(3-adamantan-1-yl-ureido)-dodecanoic acid (AUDA), 1-((3S, 5S, 7S)-adamantan-1-yl)-3-(5-(2-(2-ethoxyethoxy) ethoxy)pentyl)urea (AEPU), N-adamantyl-N[']-cyclohexyl urea (ACU), 4-(((1S, 4S)-4-(3-((3S, 5S, 7S)-adamantan-1-yl) ureido)cyclohexyl)oxy)benzoic acid (c-AUCB), 4-(((1R, 4R)-4-(3-((3S, 5S, 7S)-adamantan-1-yl)ureido)cyclohexyl)oxy)benzoic acid (t-AUCB), 4-(((1R, 4R)-4-(3-(4(trifluoromethoxy)phenyl)ureido)cyclohexyl)oxy)benzoic acid (t-TAUCB) and to a lesser extent by 8-(3-((3S, 5S, 7S)-adamantan-1-yl)ureido) octanoic acid (AUOA). Phosphatase activity is inhibited by dodecyl-phosphate, phospholipids such as phospho-lysophosphatidic acids and fatty acids such as palmitic acid and lauric acid. Bifunctional enzyme. The C-terminal domain has epoxide hydrolase activity and acts on epoxides (alkene oxides, oxiranes) and arene oxides. Plays a role in xenobiotic metabolism by degrading potentially toxic epoxides. Also determines steady-state levels of physiological mediators. Its function is as follows. Bifunctional enzyme. The N-terminal domain has lipid phosphatase activity, with the highest activity towards threo-9,10-phosphonooxy-hydroxy-octadecanoic acid, followed by erythro-9,10-phosphonooxy-hydroxy-octadecanoic acid, 12-phosphonooxy-octadec-9Z-enoic acid and 12-phosphonooxy-octadec-9E-enoic acid. Has phosphatase activity toward lyso-glycerophospholipids with also some lower activity toward lysolipids of sphingolipid and isoprenoid phosphates. The sequence is that of Bifunctional epoxide hydrolase 2 from Mus musculus (Mouse).